A 145-amino-acid chain; its full sequence is Basic phospholipase A2 BFPA (145 aa).

The N-terminal stretch at 1 to 27 (MNPAHLLVLLAVCVSLLGAANIPPQSL) is a signal peptide. Disulfide bonds link Cys-38–Cys-97, Cys-52–Cys-144, Cys-54–Cys-70, Cys-69–Cys-125, Cys-76–Cys-118, Cys-86–Cys-111, and Cys-104–Cys-116. Ca(2+)-binding residues include Tyr-53, Gly-55, and Gly-57. His-73 is a catalytic residue. Asp-74 is a Ca(2+) binding site. Asp-119 is a catalytic residue.

This sequence belongs to the phospholipase A2 family. Group I subfamily. D49 sub-subfamily. Homodimer; disulfide-linked. Requires Ca(2+) as cofactor. As to expression, expressed by the venom gland.

The protein resides in the secreted. It catalyses the reaction a 1,2-diacyl-sn-glycero-3-phosphocholine + H2O = a 1-acyl-sn-glycero-3-phosphocholine + a fatty acid + H(+). Functionally, snake venom phospholipase A2 (PLA2) that inhibits blood coagulation and shows bactericidal activities against both Gram-negative and -positive bacteria (E.coli, MIC=0.4 uM and S.aureus, MIC=0.1 uM). PLA2 catalyzes the calcium-dependent hydrolysis of the 2-acyl groups in 3-sn-phosphoglycerides. The sequence is that of Basic phospholipase A2 BFPA from Bungarus fasciatus (Banded krait).